The following is a 490-amino-acid chain: Cytochrome P450 2W1 (490 aa).

A signal peptide spans 1-22 (MALLLLLFLGLLGLWGLLCACA). Asn177 is a glycosylation site (N-linked (GlcNAc...) asparagine). Heme is bound at residue Cys433.

It belongs to the cytochrome P450 family. It depends on heme as a cofactor. In terms of tissue distribution, very low levels are detected in fetal and adult tissues. Highly expressed in several tumor samples, in particular colon and adrenal tumors.

The protein localises to the endoplasmic reticulum lumen. It localises to the cell membrane. It is found in the microsome membrane. The enzyme catalyses all-trans-retinoate + reduced [NADPH--hemoprotein reductase] + O2 = all-trans-4-hydroxyretinoate + oxidized [NADPH--hemoprotein reductase] + H2O + H(+). It catalyses the reaction 1-(9Z-octadecenoyl)-sn-glycero-3-phosphocholine + reduced [NADPH--hemoprotein reductase] + O2 = 1-[8-hydroxy-(9Z)-octadecenoyl]-sn-glycero-3-phosphocholine + oxidized [NADPH--hemoprotein reductase] + H2O + H(+). It carries out the reaction 1-(9Z-octadecenoyl)-sn-glycero-3-phosphocholine + reduced [NADPH--hemoprotein reductase] + O2 = 1-[11-hydroxy-(9Z)-octadecenoyl]-sn-glycero-3-phosphocholine + oxidized [NADPH--hemoprotein reductase] + H2O + H(+). The catalysed reaction is 1-(9Z-octadecenoyl)-sn-glycero-3-phosphocholine + reduced [NADPH--hemoprotein reductase] + O2 = 1-[(9S,10R)-epoxy-octadecanoyl]-sn-glycero-3-phosphocholine + oxidized [NADPH--hemoprotein reductase] + H2O + H(+). The enzyme catalyses 1-(9Z-octadecenoyl)-sn-glycero-3-phosphocholine + reduced [NADPH--hemoprotein reductase] + O2 = 1-[(9R,10S)-epoxy-octadecanoyl]-sn-glycero-3-phosphocholine + oxidized [NADPH--hemoprotein reductase] + H2O + H(+). In terms of biological role, a cytochrome P450 monooxygenase that may play a role in retinoid and phospholipid metabolism. Catalyzes the hydroxylation of saturated carbon hydrogen bonds. Hydroxylates all trans-retinoic acid (atRA) to 4-hydroxyretinoate and may regulate atRA clearance. Other retinoids such as all-trans retinol and all-trans retinal are potential endogenous substrates. Catalyzes both epoxidation of double bonds and hydroxylation of carbon hydrogen bonds of the fatty acyl chain of 1-acylphospholipids/2-lysophospholipids. Can metabolize various lysophospholipids classes including lysophosphatidylcholines (LPCs), lysophosphatidylinositols (LPIs), lysophosphatidylserines (LPSs), lysophosphatidylglycerols (LPGs), lysophosphatidylethanolamines (LPEs) and lysophosphatidic acids (LPAs). Has low or no activity toward 2-acylphospholipids/1-lysophospholipids, diacylphospholipids and free fatty acids. May play a role in tumorigenesis by activating procarcinogens such as aflatoxin B1, polycyclic aromatic hydrocarbon dihydrodiols and aromatic amines. Mechanistically, uses molecular oxygen inserting one oxygen atom into a substrate, and reducing the second into a water molecule, with two electrons provided by NADPH via cytochrome P450 reductase (CPR; NADPH-ferrihemoprotein reductase). In Homo sapiens (Human), this protein is Cytochrome P450 2W1.